Consider the following 86-residue polypeptide: uncharacterized protein (86 aa).

This is an uncharacterized protein from Schizosaccharomyces pombe (strain 972 / ATCC 24843) (Fission yeast).